The sequence spans 376 residues: Cytochrome b (376 aa).

4 helical membrane-spanning segments follow: residues 28–48, 72–94, 107–127, and 169–189; these read YGFLLGIIFFIQIITGVFLAS, WCFRYMHATGASLVFLLTYLHIL, SWISGLILFMIFIVTAFVGYV, and FFVLHFILPFIGLCIVFIHIF. Residues histidine 78 and histidine 92 each contribute to the heme b site. Histidine 173 and histidine 187 together coordinate heme b. Residue histidine 192 coordinates a ubiquinone. Helical transmembrane passes span 214–234, 274–294, 317–337, and 340–360; these read LLSLDVKGFNNVIILFLIQSL, VPSKPAGLVIVLLSLQLLFLL, VPIIWFMCAFYALLWIGCQLP, and IFILYGRLFIVLFFCSGLFVL.

This sequence belongs to the cytochrome b family. The main subunits of complex b-c1 are: cytochrome b, cytochrome c1 and the Rieske protein. The cofactor is heme b.

The protein resides in the mitochondrion inner membrane. In terms of biological role, component of the ubiquinol-cytochrome c reductase complex (complex III or cytochrome b-c1 complex) that is part of the mitochondrial respiratory chain. The b-c1 complex mediates electron transfer from ubiquinol to cytochrome c. Contributes to the generation of a proton gradient across the mitochondrial membrane that is then used for ATP synthesis. The protein is Cytochrome b (MT-CYB) of Plasmodium falciparum.